Here is a 103-residue protein sequence, read N- to C-terminus: N(4)-acetylcytidine amidohydrolase (103 aa).

The ASCH domain occupies 7-93 (TFFERFEQDI…VIAEIYPGLE (87 aa)). Lys-21 acts as the Proton acceptor in catalysis. Residue Thr-24 is the Nucleophile of the active site. Glu-74 acts as the Proton donor in catalysis.

Belongs to the N(4)-acetylcytidine amidohydrolase family.

The catalysed reaction is N(4)-acetylcytidine + H2O = cytidine + acetate + H(+). The enzyme catalyses N(4)-acetyl-2'-deoxycytidine + H2O = 2'-deoxycytidine + acetate + H(+). It carries out the reaction N(4)-acetylcytosine + H2O = cytosine + acetate + H(+). Its function is as follows. Catalyzes the hydrolysis of N(4)-acetylcytidine (ac4C). This is N(4)-acetylcytidine amidohydrolase from Shewanella putrefaciens (strain CN-32 / ATCC BAA-453).